We begin with the raw amino-acid sequence, 231 residues long: Large ribosomal subunit protein uL1 (231 aa).

The protein belongs to the universal ribosomal protein uL1 family. As to quaternary structure, part of the 50S ribosomal subunit.

Functionally, binds directly to 23S rRNA. The L1 stalk is quite mobile in the ribosome, and is involved in E site tRNA release. Protein L1 is also a translational repressor protein, it controls the translation of the L11 operon by binding to its mRNA. This is Large ribosomal subunit protein uL1 from Shouchella clausii (strain KSM-K16) (Alkalihalobacillus clausii).